We begin with the raw amino-acid sequence, 425 residues long: Ribosomal protein uS12 methylthiotransferase RimO (425 aa).

One can recognise an MTTase N-terminal domain in the interval 2-115; sequence KNFTVITLGC…IIDYIKQFSK (114 aa). Residues Cys-11, Cys-47, Cys-78, Cys-142, Cys-146, and Cys-149 each coordinate [4Fe-4S] cluster. The Radical SAM core domain occupies 128-357; that stretch reads VEPPSYRYIK…MARQAVISLE (230 aa). The region spanning 360–425 is the TRAM domain; it reads RALIGKKYEA…YEYDVKGVIV (66 aa).

This sequence belongs to the methylthiotransferase family. RimO subfamily. [4Fe-4S] cluster serves as cofactor.

It is found in the cytoplasm. The enzyme catalyses L-aspartate(89)-[ribosomal protein uS12]-hydrogen + (sulfur carrier)-SH + AH2 + 2 S-adenosyl-L-methionine = 3-methylsulfanyl-L-aspartate(89)-[ribosomal protein uS12]-hydrogen + (sulfur carrier)-H + 5'-deoxyadenosine + L-methionine + A + S-adenosyl-L-homocysteine + 2 H(+). In terms of biological role, catalyzes the methylthiolation of an aspartic acid residue of ribosomal protein uS12. In Thermodesulfovibrio yellowstonii (strain ATCC 51303 / DSM 11347 / YP87), this protein is Ribosomal protein uS12 methylthiotransferase RimO.